Here is a 355-residue protein sequence, read N- to C-terminus: Cobalt-precorrin-5B C(1)-methyltransferase (355 aa).

This sequence belongs to the CbiD family.

It carries out the reaction Co-precorrin-5B + S-adenosyl-L-methionine = Co-precorrin-6A + S-adenosyl-L-homocysteine. Its pathway is cofactor biosynthesis; adenosylcobalamin biosynthesis; cob(II)yrinate a,c-diamide from sirohydrochlorin (anaerobic route): step 6/10. Functionally, catalyzes the methylation of C-1 in cobalt-precorrin-5B to form cobalt-precorrin-6A. In Parasynechococcus marenigrum (strain WH8102), this protein is Cobalt-precorrin-5B C(1)-methyltransferase.